Consider the following 229-residue polypeptide: Sorting nexin-10A (229 aa).

A PX domain is found at 11 to 128 (FISVWVRDPQ…HLFLQSQLSI (118 aa)). A 1,2-diacyl-sn-glycero-3-phospho-(1D-myo-inositol-3-phosphate)-binding residues include Arg-54 and Arg-95.

This sequence belongs to the sorting nexin family.

The protein resides in the cytoplasm. Its subcellular location is the endosome membrane. It is found in the cytoskeleton. It localises to the microtubule organizing center. The protein localises to the centrosome. In terms of biological role, probable phosphoinositide-binding protein involved in protein sorting and membrane trafficking in endosomes. May play a role in cilium biogenesis through regulation of the transport and the localization of proteins to the cilium. In Danio rerio (Zebrafish), this protein is Sorting nexin-10A (snx10a).